A 629-amino-acid chain; its full sequence is 1-deoxy-D-xylulose-5-phosphate synthase (629 aa).

Thiamine diphosphate-binding positions include histidine 72 and 113–115 (GHS). A Mg(2+)-binding site is contributed by aspartate 144. Residues 145 to 146 (GA), asparagine 173, tyrosine 284, and glutamate 366 each bind thiamine diphosphate. Asparagine 173 provides a ligand contact to Mg(2+).

It belongs to the transketolase family. DXPS subfamily. As to quaternary structure, homodimer. The cofactor is Mg(2+). Thiamine diphosphate serves as cofactor.

The catalysed reaction is D-glyceraldehyde 3-phosphate + pyruvate + H(+) = 1-deoxy-D-xylulose 5-phosphate + CO2. It functions in the pathway metabolic intermediate biosynthesis; 1-deoxy-D-xylulose 5-phosphate biosynthesis; 1-deoxy-D-xylulose 5-phosphate from D-glyceraldehyde 3-phosphate and pyruvate: step 1/1. Functionally, catalyzes the acyloin condensation reaction between C atoms 2 and 3 of pyruvate and glyceraldehyde 3-phosphate to yield 1-deoxy-D-xylulose-5-phosphate (DXP). This is 1-deoxy-D-xylulose-5-phosphate synthase from Halalkalibacterium halodurans (strain ATCC BAA-125 / DSM 18197 / FERM 7344 / JCM 9153 / C-125) (Bacillus halodurans).